Consider the following 629-residue polypeptide: Acetylcholinesterase (629 aa).

An N-terminal signal peptide occupies residues 1-38 (MGQLSILCLFVTVCASVCGYSWPSDETTTKPSQFKDFH). The cysteines at positions 103 and 130 are disulfide-linked. The N-linked (GlcNAc...) asparagine glycan is linked to asparagine 125. Serine 253 (acyl-ester intermediate) is an active-site residue. An intrachain disulfide couples cysteine 307 to cysteine 322. The N-linked (GlcNAc...) asparagine glycan is linked to asparagine 308. Glutamate 382 acts as the Charge relay system in catalysis. A glycan (N-linked (GlcNAc...) asparagine) is linked at asparagine 418. An intrachain disulfide couples cysteine 458 to cysteine 574. The active-site Charge relay system is histidine 496. N-linked (GlcNAc...) asparagine glycosylation is present at asparagine 509. Serine 605 is lipidated: GPI-anchor amidated serine. Residues 606 to 629 (SSNELLPPSTSLVLIWIMTLLNAL) constitute a propeptide, removed in mature form.

The protein belongs to the type-B carboxylesterase/lipase family. Homodimer; disulfide-linked. The N-terminus is blocked.

It is found in the synapse. The protein resides in the cell membrane. It catalyses the reaction acetylcholine + H2O = choline + acetate + H(+). Its function is as follows. Rapidly hydrolyzes choline released into the synapse. This Leptinotarsa decemlineata (Colorado potato beetle) protein is Acetylcholinesterase.